A 92-amino-acid chain; its full sequence is DNA-binding protein HU 1 (92 aa).

Residue Thr-4 is modified to Phosphothreonine.

Belongs to the bacterial histone-like protein family. As to quaternary structure, homodimer. (Microbial infection) Interacts with Bacillus phage SP01 Gp46; the interaction replaces dsDNA from the hbs-DNA complex.

It is found in the cytoplasm. It localises to the nucleoid. Its function is as follows. Histone-like DNA-binding protein which introduces negative supercoils in relaxed plasmid DNA in the presence of topoisomerase I. There are at least 20,000 monomers/cell. Capable of wrapping DNA to stabilize it, and thus to prevent its denaturation under extreme environmental conditions. Binds evenly across chromosome, does not display a preference for AT content. Binds ss- and dsDNA in a sequence non-specific manner; 8 nucleotides are sufficient to bind protein. The protein is DNA-binding protein HU 1 of Bacillus subtilis (strain 168).